Reading from the N-terminus, the 524-residue chain is Solute carrier family 35 member F5 (524 aa).

The disordered stretch occupies residues 1-22; it reads MVPPRHHPGAGRPGALSSSPPF. Positions 13-22 are enriched in low complexity; the sequence is PGALSSSPPF. The next 2 membrane-spanning stretches (helical) occupy residues 69–89 and 101–121; these read MALG…SSEL and FFST…FIVW. S207 carries the phosphoserine modification. The next 8 helical transmembrane spans lie at 244–264, 269–289, 297–317, 328–348, 362–382, 396–416, 421–441, and 453–473; these read ISFF…EALS, AIVN…AAMF, FTLS…LVNL, TIGS…IVMI, MFFG…FFLL, VVLM…EFLW, FLTS…LSII, and WLFF…TLLC. The EamA domain occupies 253-317; that stretch reads FLANFSYQEA…SIGGVVLVNL (65 aa).

This sequence belongs to the SLC35F solute transporter family.

It localises to the membrane. In terms of biological role, putative solute transporter. In Bos taurus (Bovine), this protein is Solute carrier family 35 member F5 (SLC35F5).